Consider the following 322-residue polypeptide: tRNA-dihydrouridine synthase B (322 aa).

Residues 16 to 18 and Q70 contribute to the FMN site; that span reads PMA. C100 functions as the Proton donor in the catalytic mechanism. Residues K139, 200–202, and 224–225 contribute to the FMN site; these read NGD and GR.

The protein belongs to the Dus family. DusB subfamily. Requires FMN as cofactor.

The catalysed reaction is a 5,6-dihydrouridine in tRNA + NAD(+) = a uridine in tRNA + NADH + H(+). It catalyses the reaction a 5,6-dihydrouridine in tRNA + NADP(+) = a uridine in tRNA + NADPH + H(+). Catalyzes the synthesis of 5,6-dihydrouridine (D), a modified base found in the D-loop of most tRNAs, via the reduction of the C5-C6 double bond in target uridines. The chain is tRNA-dihydrouridine synthase B from Shewanella oneidensis (strain ATCC 700550 / JCM 31522 / CIP 106686 / LMG 19005 / NCIMB 14063 / MR-1).